The sequence spans 569 residues: BICD family-like cargo adapter 1 (569 aa).

The interval 1–36 is disordered; that stretch reads MSASCLDLISAPPQPDSDRMDRALNPGRQNSPDTAG. The short motif at 97–101 is the CC1 box element; the sequence is AAKLG. The stretch at 102 to 283 forms a coiled coil; it reads KALLERNQDL…TLELEKHCHH (182 aa). The tract at residues 385 to 405 is disordered; sequence ALSTDSSMDESSETLSAKDVP. A coiled-coil region spans residues 458-520; it reads NEQLQSAIRD…LEAWQDDMHR (63 aa). Residues 533-554 form a disordered region; that stretch reads EWKDPPFSFSRRGAAASRPTQR.

Belongs to the BICDR family. As to quaternary structure, part of a tripartite complex with dynein and dynactin, acts an adapter linking the dynein motor complex and dynactin. As to expression, highly expressed in developing neural tissues and developing eye.

Its subcellular location is the cytoplasm. It localises to the cytoskeleton. The protein resides in the microtubule organizing center. The protein localises to the centrosome. In terms of biological role, acts as an adapter protein linking the dynein motor complex to various cargos and converts dynein from a non-processive to a highly processive motor in the presence of dynactin. Facilitates the interaction between dynein and dynactin and activates dynein processivity (the ability to move along a microtubule for a long distance without falling off the track). Predominantly recruits 2 dyneins, which increases both the force and speed of the microtubule motor. Component of secretory vesicle machinery in developing neurons that acts as a regulator of neurite outgrowth. Regulates the secretory vesicle transport by controlling the accumulation of Rab6-containing secretory vesicles in the pericentrosomal region restricting anterograde secretory transport during the early phase of neuronal differentiation, thereby inhibiting neuritogenesis. The sequence is that of BICD family-like cargo adapter 1 (bicdl1) from Danio rerio (Zebrafish).